Reading from the N-terminus, the 231-residue chain is Cytidylate kinase (231 aa).

17-25 (GPTASGKGT) lines the ATP pocket.

This sequence belongs to the cytidylate kinase family. Type 1 subfamily.

It is found in the cytoplasm. It catalyses the reaction CMP + ATP = CDP + ADP. The enzyme catalyses dCMP + ATP = dCDP + ADP. This chain is Cytidylate kinase, found in Ralstonia pickettii (strain 12J).